We begin with the raw amino-acid sequence, 418 residues long: ADP-ribose glycohydrolase MACROD2 (418 aa).

The region spanning 57–238 is the Macro domain; that stretch reads PEEIQVKNSL…IYKRKLNEFF (182 aa). Residues 75–77, 88–90, 95–100, 183–189, and phenylalanine 222 each bind substrate; these read GDI, AAN, GGGGVD, and ISTGIYG. A disordered region spans residues 238–418; it reads FPKDGGDDEE…KDTNDDANEA (181 aa). Residues 250-262 are compositionally biased toward basic and acidic residues; that stretch reads KGDSDEMKEDTEG. A compositionally biased stretch (polar residues) spans 295 to 318; it reads TGNTQDMTAMSLETNEGNDVSSPA. A compositionally biased stretch (basic and acidic residues) spans 321 to 360; it reads PLKEGEELSEAKITGEKISVEPKTPEPEDAKMTVEEKSQE. Residues 377-389 show a composition bias toward acidic residues; that stretch reads ETEDLDGDSEEPS.

This sequence belongs to the MacroD-type family. MacroD1/2-like subfamily.

It is found in the nucleus. It catalyses the reaction 2''-O-acetyl-ADP-D-ribose + H2O = ADP-D-ribose + acetate + H(+). The enzyme catalyses 4-O-(ADP-D-ribosyl)-L-aspartyl-[protein] + H2O = L-aspartyl-[protein] + ADP-D-ribose + H(+). It carries out the reaction 5-O-(ADP-D-ribosyl)-L-glutamyl-[protein] + H2O = L-glutamyl-[protein] + ADP-D-ribose + H(+). The catalysed reaction is alpha-NAD(+) + H2O = ADP-D-ribose + nicotinamide + H(+). With respect to regulation, subject to product inhibition by ADP-ribose. Functionally, removes ADP-ribose from aspartate and glutamate residues in proteins bearing a single ADP-ribose moiety. Inactive towards proteins bearing poly-ADP-ribose. Deacetylates O-acetyl-ADP ribose, a signaling molecule generated by the deacetylation of acetylated lysine residues in histones and other proteins. The polypeptide is ADP-ribose glycohydrolase MACROD2 (Xenopus laevis (African clawed frog)).